A 44-amino-acid polypeptide reads, in one-letter code: Defensin ARD1 (44 aa).

3 disulfide bridges follow: Cys7/Cys32, Cys18/Cys40, and Cys22/Cys42.

It localises to the secreted. Its function is as follows. Possesses potent anti-fungal activity. The sequence is that of Defensin ARD1 from Archaeoprepona demophon (One-spotted leafwing butterfly).